A 284-amino-acid polypeptide reads, in one-letter code: Tropomyosin (284 aa).

Residues 1–41 (MDAIKKKMQAMKLEKDNAVDRAETAEQQSRDAALRAEKAEE) are disordered. Residues 1 to 284 (MDAIKKKMQA…DQTFSELTGY (284 aa)) adopt a coiled-coil conformation. Positions 12 to 41 (KLEKDNAVDRAETAEQQSRDAALRAEKAEE) are enriched in basic and acidic residues.

It belongs to the tropomyosin family. Homodimer.

In terms of biological role, tropomyosin, in association with the troponin complex, plays a central role in the calcium dependent regulation of muscle contraction. The chain is Tropomyosin from Haemaphysalis longicornis (Bush tick).